A 20-amino-acid polypeptide reads, in one-letter code: Ranalexin-1Cb (20 aa).

Cys14 and Cys20 form a disulfide bridge.

In terms of tissue distribution, expressed by the skin glands.

It localises to the secreted. Functionally, antibacterial activity against Gram-positive bacterium S.aureus and Gram-negative bacterium E.coli. Has activity against C.albicans. The polypeptide is Ranalexin-1Cb (Lithobates clamitans (Green frog)).